Reading from the N-terminus, the 255-residue chain is Hydroxyacylglutathione hydrolase (255 aa).

Residues His-56, His-58, Asp-60, His-61, His-114, Asp-133, and His-171 each contribute to the Zn(2+) site.

The protein belongs to the metallo-beta-lactamase superfamily. Glyoxalase II family. In terms of assembly, monomer. It depends on Zn(2+) as a cofactor.

It catalyses the reaction an S-(2-hydroxyacyl)glutathione + H2O = a 2-hydroxy carboxylate + glutathione + H(+). It participates in secondary metabolite metabolism; methylglyoxal degradation; (R)-lactate from methylglyoxal: step 2/2. Functionally, thiolesterase that catalyzes the hydrolysis of S-D-lactoyl-glutathione to form glutathione and D-lactic acid. The chain is Hydroxyacylglutathione hydrolase from Bradyrhizobium diazoefficiens (strain JCM 10833 / BCRC 13528 / IAM 13628 / NBRC 14792 / USDA 110).